A 639-amino-acid polypeptide reads, in one-letter code: 3D-(3,5/4)-trihydroxycyclohexane-1,2-dione hydrolase (639 aa).

Thiamine diphosphate is bound at residue glutamate 62. The interval 438 to 518 (SLPGDLQRMW…INILLFDNCG (81 aa)) is thiamine pyrophosphate binding. The Mg(2+) site is built by aspartate 489 and asparagine 516.

This sequence belongs to the TPP enzyme family. The cofactor is Mg(2+). Thiamine diphosphate serves as cofactor.

It catalyses the reaction 3D-3,5/4-trihydroxycyclohexane-1,2-dione + H2O = 5-deoxy-D-glucuronate + H(+). It functions in the pathway polyol metabolism; myo-inositol degradation into acetyl-CoA; acetyl-CoA from myo-inositol: step 3/7. Involved in the cleavage of the C1-C2 bond of 3D-(3,5/4)-trihydroxycyclohexane-1,2-dione (THcHDO) to yield 5-deoxy-glucuronate (5DG). This is 3D-(3,5/4)-trihydroxycyclohexane-1,2-dione hydrolase from Clostridium perfringens (strain ATCC 13124 / DSM 756 / JCM 1290 / NCIMB 6125 / NCTC 8237 / Type A).